We begin with the raw amino-acid sequence, 256 residues long: Ubiquinone/menaquinone biosynthesis C-methyltransferase UbiE (256 aa).

Residues Thr79, Asp100, and 128 to 129 each bind S-adenosyl-L-methionine; that span reads DA.

Belongs to the class I-like SAM-binding methyltransferase superfamily. MenG/UbiE family.

It carries out the reaction a 2-demethylmenaquinol + S-adenosyl-L-methionine = a menaquinol + S-adenosyl-L-homocysteine + H(+). It catalyses the reaction a 2-methoxy-6-(all-trans-polyprenyl)benzene-1,4-diol + S-adenosyl-L-methionine = a 5-methoxy-2-methyl-3-(all-trans-polyprenyl)benzene-1,4-diol + S-adenosyl-L-homocysteine + H(+). It participates in quinol/quinone metabolism; menaquinone biosynthesis; menaquinol from 1,4-dihydroxy-2-naphthoate: step 2/2. The protein operates within cofactor biosynthesis; ubiquinone biosynthesis. In terms of biological role, methyltransferase required for the conversion of demethylmenaquinol (DMKH2) to menaquinol (MKH2) and the conversion of 2-polyprenyl-6-methoxy-1,4-benzoquinol (DDMQH2) to 2-polyprenyl-3-methyl-6-methoxy-1,4-benzoquinol (DMQH2). The sequence is that of Ubiquinone/menaquinone biosynthesis C-methyltransferase UbiE from Stutzerimonas stutzeri (strain A1501) (Pseudomonas stutzeri).